Consider the following 447-residue polypeptide: Peptide chain release factor 1, mitochondrial (447 aa).

A mitochondrion-targeting transit peptide spans 1–63; it reads MNRRHLFAWL…LLNKNCSRRY (63 aa). The segment at 299–363 is GGQ domain; sequence PKDLRIDTFR…LRARLYQQII (65 aa). The GGQ motif lies at 313-315; sequence GGQ. Position 315 is an N5-methylglutamine (glutamine 315).

This sequence belongs to the prokaryotic/mitochondrial release factor family. Post-translationally, methylation of glutamine in the GGQ triplet by HEMK1 is conserved from bacteria to mammals.

The protein resides in the mitochondrion. Mitochondrial peptide chain release factor that directs the termination of translation in response to the peptide chain non-canonical stop codons AGG and AGA. Non-canonical termination codons AGG and AGA are found at the end of MT-CO1/COX1 and MT-ND6/ND6 open reading frames, respectively. Recognizes non-canonical stop codons via a network of interactions between the codon, MTRF1 and the ribosomal RNA (rRNA): in contrast to other translation release factors, which identify the codon in the A-site via direct interactions of amino acid side chains with the bases, MTRF1 repositions the first 2 bases of the stop codon to use an intricate network of interactions that includes residues of the release factor, the rRNA of the small ribosomal subunit, as well as neighboring bases of the mRNA. This Bos taurus (Bovine) protein is Peptide chain release factor 1, mitochondrial (MTRF1).